Consider the following 607-residue polypeptide: Vacuolar fusion protein MON1 homolog (607 aa).

The span at 1 to 14 shows a compositional bias: low complexity; it reads MATSDSRSSPSSSD. 2 disordered regions span residues 1-173 and 463-486; these read MATS…DDAS and PIDR…DISV. The segment covering 21–55 has biased composition (polar residues); sequence NPSSDPETNSERVQSQLESMNLSQPSEVSDGSHTE.

It belongs to the MON1/SAND family. In terms of assembly, interacts with CCZ1A, CCZ1B and RABF2B. In terms of tissue distribution, widely expressed at stable levels.

The protein localises to the endosome. It localises to the prevacuolar compartment. Plays an important role in membrane trafficking through the secretory apparatus. In complex with CCZ1, acts as a guanine exchange factor (GEF) for RABG3F of the Rab7 protein family. Promotes the exchange of GDP to GTP, converting RABG3F from an inactive GDP-bound form into an active GTP-bound form. The RABG3F active form is involved in protein trafficking from prevacuolar compartments (PVCs) to vacuoles. May serve as a linker between Rab5 and Rab7 protein families in PVCs and mediate PVC maturation. The chain is Vacuolar fusion protein MON1 homolog from Arabidopsis thaliana (Mouse-ear cress).